The sequence spans 81 residues: Translational regulator CsrA (81 aa).

It belongs to the CsrA/RsmA family. As to quaternary structure, homodimer; the beta-strands of each monomer intercalate to form a hydrophobic core, while the alpha-helices form wings that extend away from the core.

The protein localises to the cytoplasm. In terms of biological role, a translational regulator that binds mRNA to regulate translation initiation and/or mRNA stability. Usually binds in the 5'-UTR at or near the Shine-Dalgarno sequence preventing ribosome-binding, thus repressing translation. Its main target seems to be the major flagellin gene, while its function is anatagonized by FliW. This chain is Translational regulator CsrA, found in Desulforapulum autotrophicum (strain ATCC 43914 / DSM 3382 / VKM B-1955 / HRM2) (Desulfobacterium autotrophicum).